We begin with the raw amino-acid sequence, 714 residues long: Elongation factor G-like protein (714 aa).

One can recognise a tr-type G domain in the interval G21–M289. The interval G30–T37 is G1. G30–T37 contacts GTP. The G2 stretch occupies residues Q73–G77. The G3 stretch occupies residues D94–G97. GTP-binding positions include D94 to Y98 and T148 to D151. Residues T148–D151 are G4. The segment at C267 to S269 is G5.

It belongs to the TRAFAC class translation factor GTPase superfamily. Classic translation factor GTPase family. EF-G/EF-2 subfamily.

This Mycobacterium tuberculosis (strain ATCC 25618 / H37Rv) protein is Elongation factor G-like protein.